The chain runs to 293 residues: Ribosomal protein L11 methyltransferase (293 aa).

Positions 145, 166, 188, and 230 each coordinate S-adenosyl-L-methionine.

Belongs to the methyltransferase superfamily. PrmA family.

Its subcellular location is the cytoplasm. The catalysed reaction is L-lysyl-[protein] + 3 S-adenosyl-L-methionine = N(6),N(6),N(6)-trimethyl-L-lysyl-[protein] + 3 S-adenosyl-L-homocysteine + 3 H(+). Its function is as follows. Methylates ribosomal protein L11. The sequence is that of Ribosomal protein L11 methyltransferase from Escherichia coli O139:H28 (strain E24377A / ETEC).